A 295-amino-acid chain; its full sequence is Phosphoenolpyruvate phosphomutase (295 aa).

The active-site Nucleophile is the D58. Residue D58 coordinates Mg(2+).

The protein belongs to the isocitrate lyase/PEP mutase superfamily. PEP mutase family. As to quaternary structure, homotetramer. The cofactor is Mg(2+).

It carries out the reaction phosphoenolpyruvate + H(+) = 3-phosphonopyruvate. The protein operates within phosphorus metabolism; phosphonate biosynthesis. In terms of biological role, formation of a carbon-phosphorus bond by converting phosphoenolpyruvate (PEP) to phosphonopyruvate (P-Pyr). This Mytilus edulis (Blue mussel) protein is Phosphoenolpyruvate phosphomutase.